The primary structure comprises 406 residues: RNA exonuclease 4 (406 aa).

Over residues 1–10 the composition is skewed to polar residues; it reads MAPELSSNWK. 2 disordered regions span residues 1–108 and 156–181; these read MAPE…TLPS and AGLT…PTDL. Low complexity-rich tracts occupy residues 54–64, 72–82, and 94–108; these read SQQQQQASNPS, SQTQSQPSSQK, and SKPT…TLPS. Over residues 162 to 173 the composition is skewed to polar residues; that stretch reads GHSSSSPKSNKN. An Exonuclease domain is found at 216–367; sequence YLSIDCEMVG…EDARVAMLLF (152 aa). Positions 377 to 387 are enriched in basic and acidic residues; sequence ENSNRYEEGQA. Positions 377 to 406 are disordered; sequence ENSNRYEEGQAKKGGNGGGGGGGKKKKGKK. Over residues 388 to 398 the composition is skewed to gly residues; that stretch reads KKGGNGGGGGG.

It belongs to the REXO4 family.

It is found in the nucleus. Functionally, exoribonuclease involved in ribosome biosynthesis. Involved in the processing of ITS1, the internal transcribed spacer localized between the 18S and 5.8S rRNAs. The polypeptide is RNA exonuclease 4 (rex-4) (Neurospora crassa (strain ATCC 24698 / 74-OR23-1A / CBS 708.71 / DSM 1257 / FGSC 987)).